The chain runs to 465 residues: ATP synthase subunit beta (465 aa).

Residue 149 to 156 (GGAGVGKT) coordinates ATP.

Belongs to the ATPase alpha/beta chains family. As to quaternary structure, F-type ATPases have 2 components, CF(1) - the catalytic core - and CF(0) - the membrane proton channel. CF(1) has five subunits: alpha(3), beta(3), gamma(1), delta(1), epsilon(1). CF(0) has three main subunits: a(1), b(2) and c(9-12). The alpha and beta chains form an alternating ring which encloses part of the gamma chain. CF(1) is attached to CF(0) by a central stalk formed by the gamma and epsilon chains, while a peripheral stalk is formed by the delta and b chains.

It is found in the cell inner membrane. The enzyme catalyses ATP + H2O + 4 H(+)(in) = ADP + phosphate + 5 H(+)(out). Produces ATP from ADP in the presence of a proton gradient across the membrane. The catalytic sites are hosted primarily by the beta subunits. The polypeptide is ATP synthase subunit beta (Dictyoglomus thermophilum (strain ATCC 35947 / DSM 3960 / H-6-12)).